The sequence spans 224 residues: Viral late gene transcription factor 3 (224 aa).

This sequence belongs to the orthopoxvirus VLTF-3/OPG127 family. Interacts with the late transcription elongation factor VLTF-4/OPG110. Interacts with the late transcription factors VLTF-1/OPG093.

Functionally, acts with RNA polymerase to initiate transcription from late gene promoters. The sequence is that of Viral late gene transcription factor 3 (OPG127) from Monkeypox virus.